Here is a 248-residue protein sequence, read N- to C-terminus: Pyruvate formate-lyase-activating enzyme (248 aa).

The Radical SAM core domain occupies 17–248 (VDGPGIRFIV…NKILETSSYK (232 aa)). Positions 31, 35, and 38 each coordinate [4Fe-4S] cluster. Residues 37–39 (FCH), Gly-80, 135–137 (DIK), and His-208 contribute to the S-adenosyl-L-methionine site.

It belongs to the organic radical-activating enzymes family. [4Fe-4S] cluster is required as a cofactor.

The protein localises to the cytoplasm. The enzyme catalyses glycyl-[formate C-acetyltransferase] + reduced [flavodoxin] + S-adenosyl-L-methionine = glycin-2-yl radical-[formate C-acetyltransferase] + semiquinone [flavodoxin] + 5'-deoxyadenosine + L-methionine + H(+). Activation of pyruvate formate-lyase under anaerobic conditions by generation of an organic free radical, using S-adenosylmethionine and reduced flavodoxin as cosubstrates to produce 5'-deoxy-adenosine. This is Pyruvate formate-lyase-activating enzyme (pflA) from Listeria innocua serovar 6a (strain ATCC BAA-680 / CLIP 11262).